A 256-amino-acid chain; its full sequence is Dihydroorotate dehydrogenase B (NAD(+)), electron transfer subunit (256 aa).

The FAD-binding FR-type domain occupies 2–100; it reads IRLETMKVVA…MGPQGNGFDL (99 aa). Residues 51 to 54, 68 to 70, and 75 to 76 each bind FAD; these read RPIS, IYR, and GT. [2Fe-2S] cluster is bound by residues Cys-220, Cys-225, Cys-228, and Cys-243.

It belongs to the PyrK family. In terms of assembly, heterotetramer of 2 PyrK and 2 PyrD type B subunits. It depends on [2Fe-2S] cluster as a cofactor. The cofactor is FAD.

It participates in pyrimidine metabolism; UMP biosynthesis via de novo pathway; orotate from (S)-dihydroorotate (NAD(+) route): step 1/1. Responsible for channeling the electrons from the oxidation of dihydroorotate from the FMN redox center in the PyrD type B subunit to the ultimate electron acceptor NAD(+). The sequence is that of Dihydroorotate dehydrogenase B (NAD(+)), electron transfer subunit from Streptococcus pneumoniae (strain ATCC BAA-255 / R6).